A 158-amino-acid polypeptide reads, in one-letter code: Transcription elongation factor GreA (158 aa).

This sequence belongs to the GreA/GreB family.

Its function is as follows. Necessary for efficient RNA polymerase transcription elongation past template-encoded arresting sites. The arresting sites in DNA have the property of trapping a certain fraction of elongating RNA polymerases that pass through, resulting in locked ternary complexes. Cleavage of the nascent transcript by cleavage factors such as GreA or GreB allows the resumption of elongation from the new 3'terminus. GreA releases sequences of 2 to 3 nucleotides. The polypeptide is Transcription elongation factor GreA (Psychrobacter arcticus (strain DSM 17307 / VKM B-2377 / 273-4)).